Here is a 525-residue protein sequence, read N- to C-terminus: Plant UBX domain-containing protein 13 (525 aa).

The region spanning 2–44 (ATPTQEAIDTFMTITGSSNAVAVRKLEEYRGNLNRAVNAYFTH) is the UBA-like domain. 3 disordered regions span residues 67–96 (RTTD…PPFV), 150–172 (DDDN…SAEN), and 194–328 (METG…EEHD). Positions 209-229 (AEREVLRSEGWKASSSEREAS) are enriched in basic and acidic residues. The segment covering 254 to 274 (SEDDDDDDDDDPDYVEEEEEP) has biased composition (acidic residues). The residue at position 362 (S362) is a Phosphoserine. Positions 380–436 (LASLEADRVKAEARRLEEEAARVEAIEEAKRKEEEARRKVEEEQELERQLVSKEASL) form a coiled coil. A compositionally biased stretch (basic and acidic residues) spans 408-430 (AKRKEEEARRKVEEEQELERQLV). The disordered stretch occupies residues 408–446 (AKRKEEEARRKVEEEQELERQLVSKEASLPQEPPAGEEN). The 79-residue stretch at 443–521 (GEENAITLQV…GLTSKQEALF (79 aa)) folds into the UBX domain.

This Arabidopsis thaliana (Mouse-ear cress) protein is Plant UBX domain-containing protein 13.